A 644-amino-acid polypeptide reads, in one-letter code: uncharacterized protein (644 aa).

Residues M1–G39 form a disordered region. At M1–T90 the chain is on the cytoplasmic side. The span at D9–E26 shows a compositional bias: basic and acidic residues. S22, S56, and S63 each carry phosphoserine. Residues I91–F111 form a helical membrane-spanning segment. The Vacuolar portion of the chain corresponds to S112 to T122. A helical membrane pass occupies residues L123–Y143. The Cytoplasmic segment spans residues S144 to D147. The chain crosses the membrane as a helical span at residues Y148–I168. The Vacuolar portion of the chain corresponds to K169–R174. A helical membrane pass occupies residues I175 to I195. Residues L196 to T271 lie on the Cytoplasmic side of the membrane. Residues N225–S251 are disordered. Positions Q239–S251 are enriched in polar residues. At S244 the chain carries Phosphoserine. A helical transmembrane segment spans residues I272–L292. At D293–D644 the chain is on the vacuolar side. One can recognise an AB hydrolase-1 domain in the interval P348 to K619. Residues G469–T492 are disordered.

Its subcellular location is the vacuole membrane. This is an uncharacterized protein from Saccharomyces cerevisiae (strain YJM789) (Baker's yeast).